The primary structure comprises 34 residues: SCKVPFNECKYGADECCKGYVCSKRDGWCKYHIN.

3 disulfide bridges follow: Cys2–Cys17, Cys9–Cys22, and Cys16–Cys29.

The protein belongs to the neurotoxin 10 (Hwtx-1) family. 50 (Jztz-F7) subfamily. In terms of tissue distribution, expressed by the venom gland.

The protein localises to the secreted. In terms of biological role, probable ion channel inhibitor. This chain is Jingzhaotoxin F7-10.36, found in Chilobrachys guangxiensis (Chinese earth tiger tarantula).